Here is a 1465-residue protein sequence, read N- to C-terminus: DNA polymerase III PolC-type (1465 aa).

The Exonuclease domain occupies 427–583 (YVVFDVETTG…YDAEATGRLL (157 aa)).

It belongs to the DNA polymerase type-C family. PolC subfamily.

The protein resides in the cytoplasm. The catalysed reaction is DNA(n) + a 2'-deoxyribonucleoside 5'-triphosphate = DNA(n+1) + diphosphate. In terms of biological role, required for replicative DNA synthesis. This DNA polymerase also exhibits 3' to 5' exonuclease activity. In Streptococcus pyogenes serotype M5 (strain Manfredo), this protein is DNA polymerase III PolC-type.